Reading from the N-terminus, the 450-residue chain is UDP-N-acetylmuramoylalanine--D-glutamate ligase (450 aa).

119-125 contacts ATP; it reads GTNGKTT.

This sequence belongs to the MurCDEF family.

It is found in the cytoplasm. It carries out the reaction UDP-N-acetyl-alpha-D-muramoyl-L-alanine + D-glutamate + ATP = UDP-N-acetyl-alpha-D-muramoyl-L-alanyl-D-glutamate + ADP + phosphate + H(+). It participates in cell wall biogenesis; peptidoglycan biosynthesis. Its function is as follows. Cell wall formation. Catalyzes the addition of glutamate to the nucleotide precursor UDP-N-acetylmuramoyl-L-alanine (UMA). The polypeptide is UDP-N-acetylmuramoylalanine--D-glutamate ligase (Lactococcus lactis subsp. lactis (strain IL1403) (Streptococcus lactis)).